A 336-amino-acid polypeptide reads, in one-letter code: N-((2S)-2-amino-2-carboxyethyl)-L-glutamate dehydrogenase (336 aa).

The Proton donor/acceptor role is filled by Lys-78. Arg-122 and Lys-242 together coordinate NAD(+).

It belongs to the ornithine cyclodeaminase/mu-crystallin family. In terms of assembly, homodimer.

It carries out the reaction N-[(2S)-2-amino-2-carboxyethyl]-L-glutamate + NAD(+) + H2O = (S)-2,3-diaminopropanoate + 2-oxoglutarate + NADH + H(+). The protein operates within siderophore biosynthesis. Functionally, catalyzes the hydrolysis of N-((2S)-2-amino-2-carboxyethyl)-L-glutamate (ACEGA) to form L-2,3-diaminopropionic acid and 2-oxoglutarate. Involved in the biosynthesis of L-2,3-diaminopropionic acid (L-Dap), a precursor of staphyloferrin B and antibiotics. The chain is N-((2S)-2-amino-2-carboxyethyl)-L-glutamate dehydrogenase from Staphylococcus aureus (strain NCTC 8325 / PS 47).